An 84-amino-acid chain; its full sequence is PAMP-induced secreted peptide 2 (84 aa).

The N-terminal stretch at 1-24 is a signal peptide; that stretch reads MMMNKNVLSSILFFMLIGSVLVES. The disordered stretch occupies residues 50 to 84; sequence KDSGPSPGEGHKVVDRKDTFRFVKHSGPSPSGPGH. The segment covering 58–70 has biased composition (basic and acidic residues); the sequence is EGHKVVDRKDTFR. 4-hydroxyproline is present on residues P77 and P79.

Post-translationally, contains 4-hydroxyproline; hydroxylated on Pro-77 and Pro-79.

It is found in the secreted. The protein localises to the extracellular space. Its subcellular location is the apoplast. In terms of biological role, endogenous secreted peptide that acts as elicitor of immune response and positive regulator of defense response. Amplifies the immune response triggered by flg22, the active epitope of bacterial flagellin. Acts as a negative regulator of root growth. The polypeptide is PAMP-induced secreted peptide 2 (Arabidopsis thaliana (Mouse-ear cress)).